Reading from the N-terminus, the 545-residue chain is CTP synthase (545 aa).

The amidoligase domain stretch occupies residues 1–266; sequence MTHFIFVTGG…DDLICERFGF (266 aa). Position 13 (Ser13) interacts with CTP. Ser13 serves as a coordination point for UTP. ATP is bound by residues 14-19 and Asp71; that span reads SLGKGI. Residues Asp71 and Glu140 each coordinate Mg(2+). Residues 147–149, 187–192, and Lys223 each bind CTP; these read DIE and KTKPTQ. UTP-binding positions include 187–192 and Lys223; that span reads KTKPTQ. An ATP-binding site is contributed by 239 to 241; the sequence is KDA. In terms of domain architecture, Glutamine amidotransferase type-1 spans 292–543; that stretch reads RVAMVGKYVE…IDAAKTQHQK (252 aa). L-glutamine is bound at residue Gly353. Residue Cys380 is the Nucleophile; for glutamine hydrolysis of the active site. L-glutamine is bound by residues 381–384, Glu404, and Arg471; that span reads LGMQ. Residues His516 and Glu518 contribute to the active site.

The protein belongs to the CTP synthase family. In terms of assembly, homotetramer.

It catalyses the reaction UTP + L-glutamine + ATP + H2O = CTP + L-glutamate + ADP + phosphate + 2 H(+). The enzyme catalyses L-glutamine + H2O = L-glutamate + NH4(+). It carries out the reaction UTP + NH4(+) + ATP = CTP + ADP + phosphate + 2 H(+). It functions in the pathway pyrimidine metabolism; CTP biosynthesis via de novo pathway; CTP from UDP: step 2/2. With respect to regulation, allosterically activated by GTP, when glutamine is the substrate; GTP has no effect on the reaction when ammonia is the substrate. The allosteric effector GTP functions by stabilizing the protein conformation that binds the tetrahedral intermediate(s) formed during glutamine hydrolysis. Inhibited by the product CTP, via allosteric rather than competitive inhibition. Catalyzes the ATP-dependent amination of UTP to CTP with either L-glutamine or ammonia as the source of nitrogen. Regulates intracellular CTP levels through interactions with the four ribonucleotide triphosphates. In Acinetobacter baumannii (strain ACICU), this protein is CTP synthase.